The sequence spans 445 residues: Phospho-alpha-glucosidase PagL (445 aa).

4–71 (YSICIVGGGS…ELEEVIWTTD (68 aa)) serves as a coordination point for NAD(+). Substrate-binding residues include arginine 94 and asparagine 148. Residue cysteine 171 coordinates Mn(2+). The active-site Proton donor is the aspartate 172. Residue histidine 201 coordinates Mn(2+). Tyrosine 264 serves as the catalytic Proton acceptor. Arginine 284 lines the substrate pocket.

This sequence belongs to the glycosyl hydrolase 4 family. In terms of assembly, homotetramer. NAD(+) is required as a cofactor. The cofactor is Mn(2+).

In terms of biological role, phospho-alpha-glucosidase that catalyzes the hydrolysis of p-nitrophenyl-alpha-D-glucopyranoside 6-phosphate, but is not able to cleave 'natural' phospho-alpha-glucosides produced via the phosphoenolpyruvate-dependent sugar phosphotransferase system (PEP-PTS). The chain is Phospho-alpha-glucosidase PagL (pagL) from Clostridium acetobutylicum (strain ATCC 824 / DSM 792 / JCM 1419 / IAM 19013 / LMG 5710 / NBRC 13948 / NRRL B-527 / VKM B-1787 / 2291 / W).